Reading from the N-terminus, the 169-residue chain is uncharacterized protein (169 aa).

A helical transmembrane segment spans residues 10-30; that stretch reads YFVTILIIIIIILIVLLIVFL. Positions 98-123 are disordered; that stretch reads QSKPINKNNQQTKNTPTPLDDRPDLS. Residues 100 to 115 show a composition bias toward low complexity; sequence KPINKNNQQTKNTPTP.

Its subcellular location is the membrane. This is an uncharacterized protein from Acanthamoeba polyphaga (Amoeba).